Reading from the N-terminus, the 413-residue chain is Histidine--tRNA ligase (413 aa).

The protein belongs to the class-II aminoacyl-tRNA synthetase family. Homodimer.

Its subcellular location is the cytoplasm. The enzyme catalyses tRNA(His) + L-histidine + ATP = L-histidyl-tRNA(His) + AMP + diphosphate + H(+). This is Histidine--tRNA ligase from Geobacter sulfurreducens (strain ATCC 51573 / DSM 12127 / PCA).